Consider the following 564-residue polypeptide: Proline--tRNA ligase (564 aa).

This sequence belongs to the class-II aminoacyl-tRNA synthetase family. ProS type 1 subfamily. Homodimer.

The protein localises to the cytoplasm. It carries out the reaction tRNA(Pro) + L-proline + ATP = L-prolyl-tRNA(Pro) + AMP + diphosphate. Catalyzes the attachment of proline to tRNA(Pro) in a two-step reaction: proline is first activated by ATP to form Pro-AMP and then transferred to the acceptor end of tRNA(Pro). As ProRS can inadvertently accommodate and process non-cognate amino acids such as alanine and cysteine, to avoid such errors it has two additional distinct editing activities against alanine. One activity is designated as 'pretransfer' editing and involves the tRNA(Pro)-independent hydrolysis of activated Ala-AMP. The other activity is designated 'posttransfer' editing and involves deacylation of mischarged Ala-tRNA(Pro). The misacylated Cys-tRNA(Pro) is not edited by ProRS. In Xylella fastidiosa (strain M12), this protein is Proline--tRNA ligase.